Reading from the N-terminus, the 118-residue chain is Elongin-B (118 aa).

Residue methionine 1 is modified to N-acetylmethionine. Residues 1-66 (MDVFLMIRRH…LGECGFTSQT (66 aa)) form the Ubiquitin-like domain. The residue at position 84 (threonine 84) is a Phosphothreonine. The interval 92–118 (PFSSPPELPDVMKPQDSGSSANEQAVQ) is disordered. Positions 107 to 118 (DSGSSANEQAVQ) are enriched in polar residues. Residues serine 108 and serine 111 each carry the phosphoserine modification.

Belongs to the Elongin B family. Heterotrimer of an A (ELOA, ELOA2 or ELOA3P), ELOB and ELOC subunit. The elongin BC complex interacts with EPOP; leading to recruit the elongin BC complex to Polycomb group (PcG) target genes, thereby restricting excessive activity of the PRC2/EED-EZH2 complex. Component of multiple cullin-RING E3 ubiquitin-protein ligase complexes composed of Elongin BC (ELOB and ELOC), a cullin (either CUL2 or CUL5), a catalytic subunit (either RBX1 or RNF7/RBX2), as well as a substrate adapter protein that can be either ASB2, ASB9, ASB11, KLHDC2, KLHDC3, KLHDC10, APPBP2, FEM1A, FEM1B, FEM1C, LRR1, PCMTD1, SOCS1, SOCS2, SOCS5, SPSB1, SPSB3, ELOA, VHL, WSB1 or RAB40C. As part of the Elongin BC E3 ubiquitin ligase complex; interacts with NRBP1. May also interact with DCUN1D1, DCUN1D2, DCUN1D3 and DCUN1D5. May form oligomers as a KLHDC2/KLHDC3-ELOB-ELOC complex; this interaction is autoinhibitory for the E3 ligase complex as the substrate-binding site of KLHDC2/KLHDC3 is blocked in the oligomer. As to quaternary structure, (Microbial infection) Following infection by HIV-1 virus, component of a cullin-5-RING E3 ubiquitin-protein ligase complex (ECS complex) hijacked by the HIV-1 Vif protein. In terms of assembly, (Microbial infection) Substrate adapter protein can be a viral protein such as HIV Vif. (Microbial infection) Interacts with molluscum contagiosum virus MC132. As to quaternary structure, (Microbial infection) Interacts with herpes virus 8 virus protein LANA1.

Its subcellular location is the nucleus. It functions in the pathway protein modification; protein ubiquitination. In terms of biological role, SIII, also known as elongin, is a general transcription elongation factor that increases the RNA polymerase II transcription elongation past template-encoded arresting sites. Subunit A is transcriptionally active and its transcription activity is strongly enhanced by binding to the dimeric complex of the SIII regulatory subunits B and C (elongin BC complex). In embryonic stem cells, the elongin BC complex is recruited by EPOP to Polycomb group (PcG) target genes in order generate genomic region that display both active and repressive chromatin properties, an important feature of pluripotent stem cells. Its function is as follows. Core component of multiple cullin-2 and cullin-5-RING E3 ubiquitin-protein ligase complexes (ECS complexes), which mediate the ubiquitination of target proteins. By binding to BC-box motifs it seems to link target recruitment subunits, like VHL and members of the SOCS box family, to Cullin/RBX1 modules that activate E2 ubiquitination enzymes. Component the von Hippel-Lindau ubiquitination complex CBC(VHL). A number of ECS complexes (containing either KLHDC2, KLHDC3, KLHDC10, APPBP2, FEM1A, FEM1B or FEM1C as substrate-recognition component) are part of the DesCEND (destruction via C-end degrons) pathway, which recognizes a C-degron located at the extreme C terminus of target proteins, leading to their ubiquitination and degradation. The ECS(ASB9) complex mediates ubiquitination and degradation of CKB. As part of a multisubunit ubiquitin ligase complex, polyubiquitinates monoubiquitinated POLR2A. ECS(LRR1) ubiquitinates MCM7 and promotes CMG replisome disassembly by VCP and chromatin extraction during S-phase. As part of the ECS(RAB40C) complex, mediates ANKRD28 ubiquitination and degradation, thereby inhibiting protein phosphatase 6 (PP6) complex activity and focal adhesion assembly during cell migration. (Microbial infection) Following infection by HIV-1 virus, component of a cullin-5-RING E3 ubiquitin-protein ligase complex (ECS complex) hijacked by the HIV-1 Vif protein, which catalyzes ubiquitination and degradation of APOBEC3F and APOBEC3G. The complex can also ubiquitinate APOBEC3H to some extent. In Homo sapiens (Human), this protein is Elongin-B.